Here is a 117-residue protein sequence, read N- to C-terminus: Large ribosomal subunit protein bL20c (117 aa).

This sequence belongs to the bacterial ribosomal protein bL20 family.

It is found in the plastid. It localises to the chloroplast. Its function is as follows. Binds directly to 23S ribosomal RNA and is necessary for the in vitro assembly process of the 50S ribosomal subunit. It is not involved in the protein synthesizing functions of that subunit. The chain is Large ribosomal subunit protein bL20c from Manihot esculenta (Cassava).